The primary structure comprises 51 residues: Lysis protein for colicin A (51 aa).

Residues 1–18 (MKKIIICVILLAIMLLAA) form the signal peptide. A lipid anchor (N-palmitoyl cysteine) is attached at cysteine 19. Cysteine 19 carries the S-diacylglycerol cysteine lipid modification. The interval 27–51 (TGGGSVSPSSIVTGVSMGSDGVGNP) is disordered.

Its subcellular location is the cell outer membrane. Functionally, lysis proteins are required for both colicin release and partial cell lysis. This Citrobacter freundii protein is Lysis protein for colicin A (cal).